Reading from the N-terminus, the 687-residue chain is Protein SDA1 homolog (687 aa).

Phosphoserine is present on residues serine 232, serine 234, and serine 236. The stretch at 254-315 (KKGSKNKKKL…SCKERFEVKM (62 aa)) forms a coiled coil. The disordered stretch occupies residues 484–509 (LEKGENTEDDEDGWESASLSEEEEED). Over residues 490–509 (TEDDEDGWESASLSEEEEED) the composition is skewed to acidic residues. Residue threonine 552 is modified to Phosphothreonine. Phosphoserine is present on residues serine 585, serine 589, and serine 595. The segment at 604 to 651 (KKPKSDKETRLATAMAGRTDRKEFVRKKTKINPFSSSTNKEKKKQKNF) is disordered.

It belongs to the SDA1 family.

It localises to the nucleus. It is found in the nucleolus. In terms of biological role, required for 60S pre-ribosomal subunits export to the cytoplasm. This chain is Protein SDA1 homolog (Sdad1), found in Mus musculus (Mouse).